We begin with the raw amino-acid sequence, 487 residues long: UDP-glucose flavonoid 3-O-glucosyltransferase 7 (487 aa).

Histidine 23 (proton acceptor) is an active-site residue. Histidine 23 contacts an anthocyanidin. Catalysis depends on aspartate 121, which acts as the Charge relay. The UDP-alpha-D-glucose site is built by alanine 345, glutamine 347, histidine 362, tryptophan 365, asparagine 366, serine 367, and glutamate 370. Glycine 385 lines the an anthocyanidin pocket. The UDP-alpha-D-glucose site is built by glutamate 386 and glutamine 387.

Belongs to the UDP-glycosyltransferase family. Strongly expressed in achenes and receptacles.

The catalysed reaction is a flavonol + UDP-alpha-D-glucose = a flavonol 3-O-beta-D-glucoside + UDP + H(+). Functionally, broad spectrum multifunctional glucosyltransferase. Catalyzes the formation of flavonol 3-O- and 4'-O-glucosides during fruit ripening. Accepted substrates include several flavonoids, hydroxycoumarins and beta-naphthols. Uses UDP-Glc as a sugar donor, but not UDP-Gal or UDP-GlcUA. May also be involved in detoxification of xenobiotics. This Fragaria ananassa (Strawberry) protein is UDP-glucose flavonoid 3-O-glucosyltransferase 7.